A 104-amino-acid polypeptide reads, in one-letter code: Small ribosomal subunit protein uS10 (104 aa).

The protein belongs to the universal ribosomal protein uS10 family. Part of the 30S ribosomal subunit.

Functionally, involved in the binding of tRNA to the ribosomes. This Dichelobacter nodosus (strain VCS1703A) protein is Small ribosomal subunit protein uS10.